Reading from the N-terminus, the 391-residue chain is mRNA-capping enzyme subunit alpha (391 aa).

The N6-GMP-lysine intermediate role is filled by Lys-63. Positions Lys-363–Gln-391 are disordered.

The protein belongs to the eukaryotic GTase family. Heterodimer. The mRNA-capping enzyme is composed of two separate chains alpha and beta, respectively a mRNA guanylyltransferase and an mRNA 5'-triphosphate monophosphatase.

The protein localises to the nucleus. The catalysed reaction is a 5'-end diphospho-ribonucleoside in mRNA + GTP + H(+) = a 5'-end (5'-triphosphoguanosine)-ribonucleoside in mRNA + diphosphate. Second step of mRNA capping. Transfer of the GMP moiety of GTP to the 5'-end of RNA via an enzyme-GMP covalent reaction intermediate. This is mRNA-capping enzyme subunit alpha (CEG1) from Yarrowia lipolytica (strain CLIB 122 / E 150) (Yeast).